Reading from the N-terminus, the 68-residue chain is MKTQFAILLIALVLFQLLSQSDAFLSTIWNGIKSLLGRRGLNELDNLDELFDGEISQADIDFLKELMS.

Positions 1-23 are cleaved as a signal peptide; that stretch reads MKTQFAILLIALVLFQLLSQSDA. Leucine 36 bears the Leucine amide mark. Positions 40-68 are excised as a propeptide; that stretch reads GLNELDNLDELFDGEISQADIDFLKELMS.

Belongs to the non-disulfide-bridged peptide (NDBP) superfamily. Short antimicrobial peptide (group 4) family. As to expression, expressed by the venom gland.

Its subcellular location is the secreted. It localises to the target cell membrane. Its function is as follows. Amphipathic peptide that possesses relatively strong activities against Gram-positive bacteria and a fungus, but has very weak antimicrobial activities against Gram-negative bacteria. Also exhibits mild hemolytic activities against human erythrocytes (16 uM induce 70% of hemolysis). Furthermore, this peptide potently inhibits the growth of vancomycin-resistant Enterococcus (VRE) S13, a pathogen that can cause a number of human infections. Minimal inhibitory concentration (MIC) are the following: 16 uM against S.aureus, 6 uM against B.magaterium, 8 uM against M.luteus, 4 uM against VRE, 12 uM against methicillin-resistant S.aureus, 36 uM against E.coli, &gt;87 uM against P.putida, 87 uM against K.oxytoca, &gt;87 uM against E.cloacae, 84 uM against S.enterica and 17 uM against the fungus C.tropicalis. This Pandinus imperator (Emperor scorpion) protein is Pantinin-3.